The following is a 176-amino-acid chain: N-alpha-acetyltransferase 30 (176 aa).

The 157-residue stretch at 3-159 (IVYKPLDIRN…DAFKLILPLT (157 aa)) folds into the N-acetyltransferase domain.

Belongs to the acetyltransferase family. MAK3 subfamily. As to quaternary structure, component of the N-terminal acetyltransferase C (NatC) complex, which is composed of MAK3, MAK10 and MAK31.

The protein localises to the cytoplasm. The protein resides in the nucleus. It catalyses the reaction N-terminal L-methionyl-L-leucyl-[protein] + acetyl-CoA = N-terminal N(alpha)-acetyl-L-methionyl-L-leucyl-[protein] + CoA + H(+). The catalysed reaction is N-terminal L-methionyl-L-isoleucyl-[protein] + acetyl-CoA = N-terminal N(alpha)-acetyl-L-methionyl-L-isoleucyl-[protein] + CoA + H(+). It carries out the reaction N-terminal L-methionyl-L-phenylalanyl-[protein] + acetyl-CoA = N-terminal N(alpha)-acetyl-L-methionyl-L-phenylalanyl-[protein] + CoA + H(+). The enzyme catalyses N-terminal L-methionyl-L-tryptophyl-[protein] + acetyl-CoA = N-terminal N(alpha)-acetyl-L-methionyl-L-tryptophyl-[protein] + CoA + H(+). It catalyses the reaction N-terminal L-methionyl-L-tyrosyl-[protein] + acetyl-CoA = N-terminal N(alpha)-acetyl-L-methionyl-L-tyrosyl-[protein] + CoA + H(+). Its function is as follows. Catalytic component of the NatC N-terminal acetyltransferase, which catalyzes acetylation of the N-terminus Met of L-A virus GAG protein and possibly GRH1. The polypeptide is N-alpha-acetyltransferase 30 (MAK3) (Saccharomyces cerevisiae (strain ATCC 204508 / S288c) (Baker's yeast)).